A 284-amino-acid chain; its full sequence is Polyamine aminopropyltransferase (284 aa).

Residues 2–237 (ELWYTEEQTQ…GYWLFGFASK (236 aa)) enclose the PABS domain. Residue glutamine 31 participates in S-methyl-5'-thioadenosine binding. 2 residues coordinate spermidine: histidine 62 and aspartate 86. S-methyl-5'-thioadenosine contacts are provided by residues glutamate 106 and 137–138 (DG). The active-site Proton acceptor is aspartate 155. 155 to 158 (DSTD) provides a ligand contact to spermidine. An S-methyl-5'-thioadenosine-binding site is contributed by proline 162.

The protein belongs to the spermidine/spermine synthase family. In terms of assembly, homodimer or homotetramer.

The protein resides in the cytoplasm. It catalyses the reaction S-adenosyl 3-(methylsulfanyl)propylamine + putrescine = S-methyl-5'-thioadenosine + spermidine + H(+). The protein operates within amine and polyamine biosynthesis; spermidine biosynthesis; spermidine from putrescine: step 1/1. Catalyzes the irreversible transfer of a propylamine group from the amino donor S-adenosylmethioninamine (decarboxy-AdoMet) to putrescine (1,4-diaminobutane) to yield spermidine. In Alkaliphilus metalliredigens (strain QYMF), this protein is Polyamine aminopropyltransferase.